Here is a 266-residue protein sequence, read N- to C-terminus: 5'-nucleotidase SurE (266 aa).

4 residues coordinate a divalent metal cation: Asp8, Asp9, Ser39, and Asn95.

Belongs to the SurE nucleotidase family. A divalent metal cation is required as a cofactor.

The protein localises to the cytoplasm. The catalysed reaction is a ribonucleoside 5'-phosphate + H2O = a ribonucleoside + phosphate. Functionally, nucleotidase that shows phosphatase activity on nucleoside 5'-monophosphates. This is 5'-nucleotidase SurE from Syntrophus aciditrophicus (strain SB).